A 213-amino-acid polypeptide reads, in one-letter code: Octanoyltransferase (213 aa).

Residues 35–213 (DERGDAVLLL…ERHLPTLIEP (179 aa)) form the BPL/LPL catalytic domain. Substrate contacts are provided by residues 73-80 (RGGKITWH), 145-147 (AIG), and 158-160 (GFS). The active-site Acyl-thioester intermediate is C176.

This sequence belongs to the LipB family.

It is found in the cytoplasm. It carries out the reaction octanoyl-[ACP] + L-lysyl-[protein] = N(6)-octanoyl-L-lysyl-[protein] + holo-[ACP] + H(+). It functions in the pathway protein modification; protein lipoylation via endogenous pathway; protein N(6)-(lipoyl)lysine from octanoyl-[acyl-carrier-protein]: step 1/2. Its function is as follows. Catalyzes the transfer of endogenously produced octanoic acid from octanoyl-acyl-carrier-protein onto the lipoyl domains of lipoate-dependent enzymes. Lipoyl-ACP can also act as a substrate although octanoyl-ACP is likely to be the physiological substrate. The sequence is that of Octanoyltransferase from Salinispora tropica (strain ATCC BAA-916 / DSM 44818 / JCM 13857 / NBRC 105044 / CNB-440).